We begin with the raw amino-acid sequence, 97 residues long: Small cell adhesion glycoprotein (97 aa).

Over 1–36 (MTSLLTTPSPREELMTTPILQPTEALSPEDGASTAL) the chain is Extracellular. The O-linked (GalNAc...) threonine glycan is linked to Thr2. An O-linked (GalNAc...) serine glycan is attached at Ser3. Residues Thr6 and Thr7 are each glycosylated (O-linked (GalNAc...) threonine). Ser9 is a glycosylation site (O-linked (GalNAc...) serine). 3 O-linked (GalNAc...) threonine glycosylation sites follow: Thr16, Thr17, and Thr23. The chain crosses the membrane as a helical; Signal-anchor for type III membrane protein span at residues 37–57 (IAVVITVVFLTLLSVVILIFF). Topologically, residues 58–97 (YLYKNKGSYVTYEPTEGEPSAIVQMESDLAKGSEKEEYFI) are cytoplasmic.

Belongs to the SMAGP family. O-glycosylated. The O-glycan is modified with sialic acid residues. As to expression, detected in breast, endometrium, colon and biliary tract. Detected in polarized epithelial structures characterized by cell-cell adhesion (at protein level).

It is found in the cell membrane. It localises to the cytoplasmic vesicle membrane. May play a role in epithelial cell-cell contacts. May play a role in tumor invasiveness and metastasis formation. The chain is Small cell adhesion glycoprotein (SMAGP) from Homo sapiens (Human).